Reading from the N-terminus, the 285-residue chain is Orotidine 5'-phosphate decarboxylase (285 aa).

Residues D40, 62–64 (KTH), 93–102 (DRKFVDIGST), Y235, and R253 each bind substrate. The active-site Proton donor is the K95.

It belongs to the OMP decarboxylase family.

The enzyme catalyses orotidine 5'-phosphate + H(+) = UMP + CO2. Its pathway is pyrimidine metabolism; UMP biosynthesis via de novo pathway; UMP from orotate: step 2/2. The polypeptide is Orotidine 5'-phosphate decarboxylase (URA3) (Paracoccidioides brasiliensis).